A 492-amino-acid polypeptide reads, in one-letter code: Linolenate hydroperoxide lyase, chloroplastic (492 aa).

The segment at 1 to 33 (MLLRTMAATSPRPPPSTSLTSQQPPSPPSQLPL) is disordered. The N-terminal 34 residues, 1 to 34 (MLLRTMAATSPRPPPSTSLTSQQPPSPPSQLPLR), are a transit peptide targeting the chloroplast. Heme is bound at residue Cys-454.

It belongs to the cytochrome P450 family. Requires heme as cofactor. In terms of tissue distribution, expressed in roots, leaves, flowers and siliques.

The protein resides in the plastid. It localises to the chloroplast. Catalyzes the conversion of (9Z,11E,15Z)-(13S)-hydroperoxyoctadeca-9,11,15-trienoate to (9Z)-12-oxo-dodec-9-enoate and cis-3-hexenal. Possesses low activity toward (9Z,11E)-(13S)-13-hydroperoxyoctadeca-9,11-dienoate. Required for the synthesis of the green leaf volatiles (GLVs) hexanal and trans-2-hexenal. The chain is Linolenate hydroperoxide lyase, chloroplastic from Arabidopsis thaliana (Mouse-ear cress).